The chain runs to 130 residues: Small ribosomal subunit protein uS8 (130 aa).

This sequence belongs to the universal ribosomal protein uS8 family. Part of the 30S ribosomal subunit. Contacts proteins S5 and S12.

One of the primary rRNA binding proteins, it binds directly to 16S rRNA central domain where it helps coordinate assembly of the platform of the 30S subunit. This chain is Small ribosomal subunit protein uS8, found in Shewanella loihica (strain ATCC BAA-1088 / PV-4).